A 321-amino-acid polypeptide reads, in one-letter code: Aspartate carbamoyltransferase catalytic subunit (321 aa).

Carbamoyl phosphate contacts are provided by Arg-64 and Thr-65. Lys-92 is an L-aspartate binding site. Arg-114, His-144, and Gln-147 together coordinate carbamoyl phosphate. Residues Arg-177 and Arg-232 each contribute to the L-aspartate site. The carbamoyl phosphate site is built by Gly-273 and Pro-274.

It belongs to the aspartate/ornithine carbamoyltransferase superfamily. ATCase family. As to quaternary structure, heterododecamer (2C3:3R2) of six catalytic PyrB chains organized as two trimers (C3), and six regulatory PyrI chains organized as three dimers (R2).

It carries out the reaction carbamoyl phosphate + L-aspartate = N-carbamoyl-L-aspartate + phosphate + H(+). It participates in pyrimidine metabolism; UMP biosynthesis via de novo pathway; (S)-dihydroorotate from bicarbonate: step 2/3. In terms of biological role, catalyzes the condensation of carbamoyl phosphate and aspartate to form carbamoyl aspartate and inorganic phosphate, the committed step in the de novo pyrimidine nucleotide biosynthesis pathway. The protein is Aspartate carbamoyltransferase catalytic subunit of Alkalilimnicola ehrlichii (strain ATCC BAA-1101 / DSM 17681 / MLHE-1).